Consider the following 344-residue polypeptide: Dihydroorotase (344 aa).

The Zn(2+) site is built by H14 and H16. Residues 16-18 (HLR) and N42 contribute to the substrate site. The Zn(2+) site is built by K100, H137, and H175. An N6-carboxylysine modification is found at K100. H137 contributes to the substrate binding site. L220 serves as a coordination point for substrate. D248 is a binding site for Zn(2+). D248 is an active-site residue. The substrate site is built by H252 and A264.

The protein belongs to the metallo-dependent hydrolases superfamily. DHOase family. Class II DHOase subfamily. As to quaternary structure, homodimer. Zn(2+) is required as a cofactor.

The catalysed reaction is (S)-dihydroorotate + H2O = N-carbamoyl-L-aspartate + H(+). It participates in pyrimidine metabolism; UMP biosynthesis via de novo pathway; (S)-dihydroorotate from bicarbonate: step 3/3. Functionally, catalyzes the reversible cyclization of carbamoyl aspartate to dihydroorotate. The chain is Dihydroorotase from Cupriavidus pinatubonensis (strain JMP 134 / LMG 1197) (Cupriavidus necator (strain JMP 134)).